The following is a 118-amino-acid chain: Elongin-B (118 aa).

Methionine 1 is modified (N-acetylmethionine). The 66-residue stretch at 1–66 (MDVFLMIRRH…LGECGFTSQT (66 aa)) folds into the Ubiquitin-like domain. Phosphothreonine is present on threonine 84. The tract at residues 92–118 (PFSSPPELPDVMKPQDSGSSANEQAVQ) is disordered. A compositionally biased stretch (polar residues) spans 107–118 (DSGSSANEQAVQ). Serine 108 and serine 111 each carry phosphoserine.

Belongs to the Elongin B family. As to quaternary structure, heterotrimer of an A (ELOA, ELOA2 or ELOA3P), ELOB and ELOC subunit. The elongin BC complex interacts with EPOP; leading to recruit the elongin BC complex to Polycomb group (PcG) target genes, thereby restricting excessive activity of the PRC2/EED-EZH2 complex. Component of multiple cullin-RING E3 ubiquitin-protein ligase complexes composed of Elongin BC (ELOB and ELOC), a cullin (either CUL2 or CUL5), a catalytic subunit (either RBX1 or RNF7/RBX2), as well as a substrate adapter protein that can be either ASB2, ASB9, ASB11, KLHDC2, KLHDC3, KLHDC10, APPBP2, FEM1A, FEM1B, FEM1C, LRR1, PCMTD1, SOCS1, SOCS2, SOCS5, SPSB1, SPSB3, ELOA, VHL, WSB1 or RAB40C. As part of the Elongin BC E3 ubiquitin ligase complex; interacts with NRBP1. May also interact with DCUN1D1, DCUN1D2, DCUN1D3 and DCUN1D5. May form oligomers as a KLHDC2/KLHDC3-ELOB-ELOC complex; this interaction is autoinhibitory for the E3 ligase complex as the substrate-binding site of KLHDC2/KLHDC3 is blocked in the oligomer. In terms of assembly, (Microbial infection) Following infection by HIV-1 virus, component of a cullin-5-RING E3 ubiquitin-protein ligase complex (ECS complex) hijacked by the HIV-1 Vif protein. (Microbial infection) Substrate adapter protein can be a viral protein such as HIV Vif. As to quaternary structure, (Microbial infection) Interacts with molluscum contagiosum virus MC132. In terms of assembly, (Microbial infection) Interacts with herpes virus 8 virus protein LANA1.

The protein localises to the nucleus. The protein operates within protein modification; protein ubiquitination. SIII, also known as elongin, is a general transcription elongation factor that increases the RNA polymerase II transcription elongation past template-encoded arresting sites. Subunit A is transcriptionally active and its transcription activity is strongly enhanced by binding to the dimeric complex of the SIII regulatory subunits B and C (elongin BC complex). In embryonic stem cells, the elongin BC complex is recruited by EPOP to Polycomb group (PcG) target genes in order generate genomic region that display both active and repressive chromatin properties, an important feature of pluripotent stem cells. Functionally, core component of multiple cullin-2 and cullin-5-RING E3 ubiquitin-protein ligase complexes (ECS complexes), which mediate the ubiquitination of target proteins. By binding to BC-box motifs it seems to link target recruitment subunits, like VHL and members of the SOCS box family, to Cullin/RBX1 modules that activate E2 ubiquitination enzymes. Component the von Hippel-Lindau ubiquitination complex CBC(VHL). A number of ECS complexes (containing either KLHDC2, KLHDC3, KLHDC10, APPBP2, FEM1A, FEM1B or FEM1C as substrate-recognition component) are part of the DesCEND (destruction via C-end degrons) pathway, which recognizes a C-degron located at the extreme C terminus of target proteins, leading to their ubiquitination and degradation. The ECS(ASB9) complex mediates ubiquitination and degradation of CKB. As part of a multisubunit ubiquitin ligase complex, polyubiquitinates monoubiquitinated POLR2A. ECS(LRR1) ubiquitinates MCM7 and promotes CMG replisome disassembly by VCP and chromatin extraction during S-phase. As part of the ECS(RAB40C) complex, mediates ANKRD28 ubiquitination and degradation, thereby inhibiting protein phosphatase 6 (PP6) complex activity and focal adhesion assembly during cell migration. Its function is as follows. (Microbial infection) Following infection by HIV-1 virus, component of a cullin-5-RING E3 ubiquitin-protein ligase complex (ECS complex) hijacked by the HIV-1 Vif protein, which catalyzes ubiquitination and degradation of APOBEC3F and APOBEC3G. The complex can also ubiquitinate APOBEC3H to some extent. The polypeptide is Elongin-B (Homo sapiens (Human)).